The following is a 319-amino-acid chain: Acetyl-coenzyme A carboxylase carboxyl transferase subunit alpha (319 aa).

The CoA carboxyltransferase C-terminal domain occupies 35 to 296 (NIDEEVHRLR…KAQLLADLAD (262 aa)).

The protein belongs to the AccA family. Acetyl-CoA carboxylase is a heterohexamer composed of biotin carboxyl carrier protein (AccB), biotin carboxylase (AccC) and two subunits each of ACCase subunit alpha (AccA) and ACCase subunit beta (AccD).

It is found in the cytoplasm. It carries out the reaction N(6)-carboxybiotinyl-L-lysyl-[protein] + acetyl-CoA = N(6)-biotinyl-L-lysyl-[protein] + malonyl-CoA. It participates in lipid metabolism; malonyl-CoA biosynthesis; malonyl-CoA from acetyl-CoA: step 1/1. Its function is as follows. Component of the acetyl coenzyme A carboxylase (ACC) complex. First, biotin carboxylase catalyzes the carboxylation of biotin on its carrier protein (BCCP) and then the CO(2) group is transferred by the carboxyltransferase to acetyl-CoA to form malonyl-CoA. This Escherichia coli O127:H6 (strain E2348/69 / EPEC) protein is Acetyl-coenzyme A carboxylase carboxyl transferase subunit alpha.